The chain runs to 505 residues: Flagellin (505 aa).

It belongs to the bacterial flagellin family.

The protein localises to the secreted. The protein resides in the bacterial flagellum. Flagellin is the subunit protein which polymerizes to form the filaments of bacterial flagella. This is Flagellin (fliC) from Salmonella senftenberg.